Here is a 212-residue protein sequence, read N- to C-terminus: MKKSMLKNGLLLGLFALLCTGLVAIVNQLTYAKIKQQEQIELSRVLHQIIPDEIHDNELTEHCITIQDSDFLGTTQPLPAYIATRNGDGVAIAIETVAPDGYNGNIKIIIGLNKAGEVLGVRTLSHQETPGLGDKIELRKSDWVTKFNGLTVSSEKDKRWHVKKDGGQIDQFTGATITPRAYVNAVKLATLYFNEHKQKLLSAPASCEVDNE.

A helical membrane pass occupies residues 9–29 (GLLLGLFALLCTGLVAIVNQL). At threonine 176 the chain carries FMN phosphoryl threonine.

This sequence belongs to the RnfG family. The complex is composed of six subunits: RnfA, RnfB, RnfC, RnfD, RnfE and RnfG. FMN is required as a cofactor.

Its subcellular location is the cell inner membrane. Functionally, part of a membrane-bound complex that couples electron transfer with translocation of ions across the membrane. This is Ion-translocating oxidoreductase complex subunit G from Shewanella piezotolerans (strain WP3 / JCM 13877).